A 343-amino-acid polypeptide reads, in one-letter code: DNA-directed RNA polymerase subunit alpha (343 aa).

Positions 1–239 are alpha N-terminal domain (alpha-NTD); it reads MGETVTIQKN…DQLNVFVNFE (239 aa). The interval 255–343 is alpha C-terminal domain (alpha-CTD); it reads FNPAFLKKVD…ELAKRFEDHY (89 aa).

This sequence belongs to the RNA polymerase alpha chain family. Homodimer. The RNAP catalytic core consists of 2 alpha, 1 beta, 1 beta' and 1 omega subunit. When a sigma factor is associated with the core the holoenzyme is formed, which can initiate transcription.

The enzyme catalyses RNA(n) + a ribonucleoside 5'-triphosphate = RNA(n+1) + diphosphate. Its function is as follows. DNA-dependent RNA polymerase catalyzes the transcription of DNA into RNA using the four ribonucleoside triphosphates as substrates. The chain is DNA-directed RNA polymerase subunit alpha from Bradyrhizobium sp. (strain BTAi1 / ATCC BAA-1182).